Consider the following 540-residue polypeptide: PTS system alpha-glucoside-specific EIICB component (540 aa).

One can recognise a PTS EIIC type-1 domain in the interval 1–420 (MLSQIQRFGG…LNLKTPGREE (420 aa)). 11 consecutive transmembrane segments (helical) span residues 12–32 (MFTP…AIML), 87–107 (ACLA…AMGM), 130–150 (IAGI…SGLV), 174–194 (FVVI…LLGW), 201–221 (IESL…VYIF), 225–245 (ILIP…GPAV), 277–297 (FALH…ALYF), 307–327 (VAGL…TEPL), 329–349 (FTFL…AATM), 352–372 (VMYI…QFLP), and 384–404 (SMMF…FVVF). One can recognise a PTS EIIB type-1 domain in the interval 448 to 530 (LGQAAGFLQA…ENLMKDSLST (83 aa)). The Phosphocysteine intermediate; for EIIB activity role is filled by C470.

The protein localises to the cell membrane. The phosphoenolpyruvate-dependent sugar phosphotransferase system (sugar PTS), a major carbohydrate active -transport system, catalyzes the phosphorylation of incoming sugar substrates concomitantly with their translocation across the cell membrane. This system is involved in alpha-glucoside transport. In terms of biological role, involved in the transport and simultaneous phosphorylation at O-6 of the glucosyl moiety of sucrose and its five linkage-isomeric alpha-D-glucosyl-D-fructoses. Can also transport maltose, isomaltose and maltitol, phosphorylating at O-6 of their non-reducing glucose portion. In Klebsiella pneumoniae, this protein is PTS system alpha-glucoside-specific EIICB component (aglA).